A 183-amino-acid chain; its full sequence is ATP-dependent protease subunit HslV (183 aa).

The active site involves Thr13. Residues Gly168, Cys171, and Thr174 each coordinate Na(+).

It belongs to the peptidase T1B family. HslV subfamily. In terms of assembly, a double ring-shaped homohexamer of HslV is capped on each side by a ring-shaped HslU homohexamer. The assembly of the HslU/HslV complex is dependent on binding of ATP.

The protein resides in the cytoplasm. The enzyme catalyses ATP-dependent cleavage of peptide bonds with broad specificity.. Allosterically activated by HslU binding. In terms of biological role, protease subunit of a proteasome-like degradation complex believed to be a general protein degrading machinery. This chain is ATP-dependent protease subunit HslV, found in Xanthomonas euvesicatoria pv. vesicatoria (strain 85-10) (Xanthomonas campestris pv. vesicatoria).